Reading from the N-terminus, the 702-residue chain is MPLEMFMFATTRMALLIGGAIGGATFPLFAQETTKNDTVIVTSPVQSGATKLATPDIETPQSVSIITRQQFEEQGATSVRQAVSYTPGVYSNQIGASNRFDYIVLRGFSDGSLDNVYLDGLKMMGDTNSHSSLVVDPWFLEDIEVVRGPASVLYGRSSPGGIVALTSRKPAFDAGGEVKLFAGNNNQRGAAFDVTGPLDDNERVAARLSGMTRYADSQFTPLKEERYALMPSLTWRITDRTRLDLMAYLHRDPEGGSHSGLPYQGTVVPYNGGKISNTFFEGEDDYDKYDRRENMVGYNIEHLFDNGWSVRQKLRYLHTKVTLNQVYAAGWLNETALNRGYSGSGEKMSAIALDNQLDGSVDTGAINHRLLVGIDYQDRSNHTTGYYGAFPPIDAFNPVYGAQPDYITLYSREKHKLRQTGYYLQDQMSWDRWRFTLGGRYDRVSVSNIDKLHDSRSDLDKNNVSTRAALLYLFDNGVAPYLSYSTAFTPTSFADENGNVLEPMKGKQWEAGVKYEPPGGNSQFSAAVYRINQTNIATKEEPTDPYRSIGEIESKGVELEAISHLSDSVRLQAAYTYTDIRYKKSSPQEQGKRAVYAPRNQASAWLSYDVKSGLLEGLTLGSGIRYVNGVTSDRLNTHTLPSYTLVDMVVGYDLSSIGLNGLSAQLNVNNLTDKRYVAACNSLSYCYFGAERSIVGSVSWAF.

The first 30 residues, 1–30, serve as a signal peptide directing secretion; it reads MPLEMFMFATTRMALLIGGAIGGATFPLFA. The TBDR plug domain maps to 55–168; it reads PDIETPQSVS…PGGIVALTSR (114 aa). The TBDR beta-barrel domain maps to 173-702; that stretch reads DAGGEVKLFA…SIVGSVSWAF (530 aa).

Belongs to the TonB-dependent receptor family.

It is found in the cell outer membrane. Its function is as follows. Ferrioxamine binding and uptake, in association with the TonB protein. May play a role in intestinal colonization. The polypeptide is Ferrioxamine B receptor (foxA) (Salmonella typhimurium (strain SL1344)).